Reading from the N-terminus, the 262-residue chain is GTP cyclohydrolase 1 type 2 homolog (262 aa).

A divalent metal cation-binding residues include histidine 68, histidine 69, aspartate 108, histidine 226, and glutamate 229.

The protein belongs to the GTP cyclohydrolase I type 2/NIF3 family. As to quaternary structure, homohexamer.

This Ureaplasma parvum serovar 3 (strain ATCC 700970) protein is GTP cyclohydrolase 1 type 2 homolog.